Reading from the N-terminus, the 481-residue chain is Proline--tRNA ligase (481 aa).

It belongs to the class-II aminoacyl-tRNA synthetase family. ProS type 3 subfamily. In terms of assembly, homodimer.

It localises to the cytoplasm. It catalyses the reaction tRNA(Pro) + L-proline + ATP = L-prolyl-tRNA(Pro) + AMP + diphosphate. Functionally, catalyzes the attachment of proline to tRNA(Pro) in a two-step reaction: proline is first activated by ATP to form Pro-AMP and then transferred to the acceptor end of tRNA(Pro). This is Proline--tRNA ligase from Saccharolobus islandicus (strain Y.N.15.51 / Yellowstone #2) (Sulfolobus islandicus).